Consider the following 316-residue polypeptide: DDRGK domain-containing protein 1 (316 aa).

Residues 1-3 lie on the Lumenal side of the membrane; sequence MVE. Residues 4–24 form a helical membrane-spanning segment; the sequence is LDYLFLGSVGFLTIALMLIIL. Topologically, residues 25–316 are cytoplasmic; it reads RIIKLYFDEK…VEHVSELTAA (292 aa). Positions 147–187 are disordered; the sequence is LEQEKEKRLQKEREKQMEQEEEERKRKCREREEREKREEEE.

It belongs to the DDRGK1 family.

Its subcellular location is the endoplasmic reticulum membrane. In terms of biological role, substrate adapter for ufmylation, the covalent attachment of the ubiquitin-like modifier UFM1 to substrate proteins. The polypeptide is DDRGK domain-containing protein 1 (Brugia malayi (Filarial nematode worm)).